The following is a 66-amino-acid chain: MSAISYLKNSMTMHKTIYQKKVESLVKNDLFFHEKSIEKSKIMKNENVRKQLTKGYMKLLSEYKED.

The polypeptide is SPbeta prophage-derived uncharacterized protein YopM (yopM) (Bacillus subtilis (strain 168)).